A 99-amino-acid chain; its full sequence is Protein Tat (99 aa).

Positions 1 to 24 (MEVVDPKIDPWNHPGSQPETPCNN) are interaction with human CREBBP. The interval 1-48 (MEVVDPKIDPWNHPGSQPETPCNNCYCKKCCFHCPLCFMKKGLGISYG) is transactivation. Residues cysteine 22, cysteine 25, and cysteine 27 each contribute to the Zn(2+) site. Positions 22-37 (CNNCYCKKCCFHCPLC) are cysteine-rich. Lysine 28 bears the N6-acetyllysine; by host PCAF mark. Residues cysteine 30, histidine 33, cysteine 34, and cysteine 37 each contribute to the Zn(2+) site. Positions 38–48 (FMKKGLGISYG) are core. The disordered stretch occupies residues 47–99 (YGRKKRRQRRRTPQGSKIHQDPVPKQPLSQTRGDPTGPEESKKKVESQTETDP). The span at 48-58 (GRKKRRQRRRT) shows a compositional bias: basic residues. Positions 49–57 (RKKRRQRRR) match the Nuclear localization signal, RNA-binding (TAR), and protein transduction motif. The interaction with the host capping enzyme RNGTT stretch occupies residues 49-86 (RKKRRQRRRTPQGSKIHQDPVPKQPLSQTRGDPTGPEE). An N6-acetyllysine; by host EP300 and GCN5L2 mark is found at lysine 50 and lysine 51. Residues arginine 52 and arginine 53 each carry the asymmetric dimethylarginine; by host PRMT6 modification. Residue lysine 71 forms a Glycyl lysine isopeptide (Lys-Gly) (interchain with G-Cter in ubiquitin) linkage. Residues 78 to 80 (RGD) carry the Cell attachment site motif.

The protein belongs to the lentiviruses Tat family. In terms of assembly, interacts with host CCNT1. Associates with the P-TEFb complex composed at least of Tat, P-TEFb (CDK9 and CCNT1), TAR RNA, RNA Pol II. Recruits the HATs CREBBP, TAF1/TFIID, EP300, PCAF and GCN5L2. Interacts with host KAT5/Tip60; this interaction targets the latter to degradation. Interacts with the host deacetylase SIRT1. Interacts with host capping enzyme RNGTT; this interaction stimulates RNGTT. Binds to host KDR, and to the host integrins ITGAV/ITGB3 and ITGA5/ITGB1. Interacts with host KPNB1/importin beta-1 without previous binding to KPNA1/importin alpha-1. Interacts with EIF2AK2. Interacts with host nucleosome assembly protein NAP1L1; this interaction may be required for the transport of Tat within the nucleus, since the two proteins interact at the nuclear rim. Interacts with host C1QBP/SF2P32; this interaction involves lysine-acetylated Tat. Interacts with the host chemokine receptors CCR2, CCR3 and CXCR4. Interacts with host DPP4/CD26; this interaction may trigger an anti-proliferative effect. Interacts with host LDLR. Interacts with the host extracellular matrix metalloproteinase MMP1. Interacts with host PRMT6; this interaction mediates Tat's methylation. Interacts with, and is ubiquitinated by MDM2/Hdm2. Interacts with host PSMC3 and HTATIP2. Interacts with STAB1; this interaction may overcome SATB1-mediated repression of IL2 and IL2RA (interleukin) in T cells by binding to the same domain than HDAC1. Interacts (when acetylated) with human CDK13, thereby increasing HIV-1 mRNA splicing and promoting the production of the doubly spliced HIV-1 protein Nef. Interacts with host TBP; this interaction modulates the activity of transcriptional pre-initiation complex. Interacts with host RELA. Interacts with host PLSCR1; this interaction negatively regulates Tat transactivation activity by altering its subcellular distribution. Post-translationally, asymmetrical arginine methylation by host PRMT6 seems to diminish the transactivation capacity of Tat and affects the interaction with host CCNT1. In terms of processing, acetylation by EP300, CREBBP, GCN5L2/GCN5 and PCAF regulates the transactivation activity of Tat. EP300-mediated acetylation of Lys-50 promotes dissociation of Tat from the TAR RNA through the competitive binding to PCAF's bromodomain. In addition, the non-acetylated Tat's N-terminus can also interact with PCAF. PCAF-mediated acetylation of Lys-28 enhances Tat's binding to CCNT1. Lys-50 is deacetylated by SIRT1. Polyubiquitination by host MDM2 does not target Tat to degradation, but activates its transactivation function and fosters interaction with CCNT1 and TAR RNA. Post-translationally, phosphorylated by EIF2AK2 on serine and threonine residues adjacent to the basic region important for TAR RNA binding and function. Phosphorylation of Tat by EIF2AK2 is dependent on the prior activation of EIF2AK2 by dsRNA.

Its subcellular location is the host nucleus. It localises to the host nucleolus. The protein localises to the host cytoplasm. The protein resides in the secreted. Transcriptional activator that increases RNA Pol II processivity, thereby increasing the level of full-length viral transcripts. Recognizes a hairpin structure at the 5'-LTR of the nascent viral mRNAs referred to as the transactivation responsive RNA element (TAR) and recruits the cyclin T1-CDK9 complex (P-TEFb complex) that will in turn hyperphosphorylate the RNA polymerase II to allow efficient elongation. The CDK9 component of P-TEFb and other Tat-activated kinases hyperphosphorylate the C-terminus of RNA Pol II that becomes stabilized and much more processive. Other factors such as HTATSF1/Tat-SF1, SUPT5H/SPT5, and HTATIP2 are also important for Tat's function. Besides its effect on RNA Pol II processivity, Tat induces chromatin remodeling of proviral genes by recruiting the histone acetyltransferases (HATs) CREBBP, EP300 and PCAF to the chromatin. This also contributes to the increase in proviral transcription rate, especially when the provirus integrates in transcriptionally silent region of the host genome. To ensure maximal activation of the LTR, Tat mediates nuclear translocation of NF-kappa-B by interacting with host RELA. Through its interaction with host TBP, Tat may also modulate transcription initiation. Tat can reactivate a latently infected cell by penetrating in it and transactivating its LTR promoter. In the cytoplasm, Tat is thought to act as a translational activator of HIV-1 mRNAs. Its function is as follows. Extracellular circulating Tat can be endocytosed by surrounding uninfected cells via the binding to several surface receptors such as CD26, CXCR4, heparan sulfate proteoglycans (HSPG) or LDLR. Neurons are rarely infected, but they internalize Tat via their LDLR. Through its interaction with nuclear HATs, Tat is potentially able to control the acetylation-dependent cellular gene expression. Modulates the expression of many cellular genes involved in cell survival, proliferation or in coding for cytokines or cytokine receptors. Tat plays a role in T-cell and neurons apoptosis. Tat induced neurotoxicity and apoptosis probably contribute to neuroAIDS. Circulating Tat also acts as a chemokine-like and/or growth factor-like molecule that binds to specific receptors on the surface of the cells, affecting many cellular pathways. In the vascular system, Tat binds to ITGAV/ITGB3 and ITGA5/ITGB1 integrins dimers at the surface of endothelial cells and competes with bFGF for heparin-binding sites, leading to an excess of soluble bFGF. This is Protein Tat from Homo sapiens (Human).